Here is a 260-residue protein sequence, read N- to C-terminus: Putative ABC transporter ATP-binding protein SCO3161 (260 aa).

An ABC transporter domain is found at 16 to 246; it reads LDVSGLAFAY…DDLMRAHRLE (231 aa). An ATP-binding site is contributed by 49-56; it reads GPNGAGKT.

This sequence belongs to the ABC transporter superfamily.

Its subcellular location is the cell membrane. Functionally, probably part of an ABC transporter complex. Responsible for energy coupling to the transport system. The polypeptide is Putative ABC transporter ATP-binding protein SCO3161 (Streptomyces coelicolor (strain ATCC BAA-471 / A3(2) / M145)).